A 443-amino-acid polypeptide reads, in one-letter code: UDP-N-acetylmuramate--L-alanine ligase (443 aa).

110–116 (GAHGKTS) contacts ATP.

It belongs to the MurCDEF family.

Its subcellular location is the cytoplasm. It catalyses the reaction UDP-N-acetyl-alpha-D-muramate + L-alanine + ATP = UDP-N-acetyl-alpha-D-muramoyl-L-alanine + ADP + phosphate + H(+). The protein operates within cell wall biogenesis; peptidoglycan biosynthesis. Cell wall formation. The chain is UDP-N-acetylmuramate--L-alanine ligase from Streptococcus agalactiae serotype V (strain ATCC BAA-611 / 2603 V/R).